Here is a 263-residue protein sequence, read N- to C-terminus: Dermonecrotic toxin SpaSicTox-betaIF1 (263 aa).

Positions 15 and 17 each coordinate Mg(2+). The active-site Nucleophile is His31. Cystine bridges form between Cys35/Cys41 and Cys37/Cys179. A Mg(2+)-binding site is contributed by Asp75.

It belongs to the arthropod phospholipase D family. Class II subfamily. It depends on Mg(2+) as a cofactor. As to expression, expressed by the venom gland.

It is found in the secreted. It carries out the reaction an N-(acyl)-sphingosylphosphocholine = an N-(acyl)-sphingosyl-1,3-cyclic phosphate + choline. The catalysed reaction is an N-(acyl)-sphingosylphosphoethanolamine = an N-(acyl)-sphingosyl-1,3-cyclic phosphate + ethanolamine. It catalyses the reaction a 1-acyl-sn-glycero-3-phosphocholine = a 1-acyl-sn-glycero-2,3-cyclic phosphate + choline. The enzyme catalyses a 1-acyl-sn-glycero-3-phosphoethanolamine = a 1-acyl-sn-glycero-2,3-cyclic phosphate + ethanolamine. Its function is as follows. Dermonecrotic toxins cleave the phosphodiester linkage between the phosphate and headgroup of certain phospholipids (sphingolipid and lysolipid substrates), forming an alcohol (often choline) and a cyclic phosphate. This toxin acts on sphingomyelin (SM). It may also act on ceramide phosphoethanolamine (CPE), lysophosphatidylcholine (LPC) and lysophosphatidylethanolamine (LPE), but not on lysophosphatidylserine (LPS), and lysophosphatidylglycerol (LPG). It acts by transphosphatidylation, releasing exclusively cyclic phosphate products as second products. Induces dermonecrosis, hemolysis, increased vascular permeability, edema, inflammatory response, and platelet aggregation. The protein is Dermonecrotic toxin SpaSicTox-betaIF1 of Sicarius patagonicus (Six-eyed sand spider).